The sequence spans 279 residues: Large ribosomal subunit protein uL2 (279 aa).

Positions 224 to 279 (AMNAVDHPMGGGRGHSKGGNIPRSPWNQPSRGLKTRPKKSWDWMIVSDRRKNKAGK) are disordered.

The protein belongs to the universal ribosomal protein uL2 family. As to quaternary structure, part of the 50S ribosomal subunit. Forms a bridge to the 30S subunit in the 70S ribosome.

In terms of biological role, one of the primary rRNA binding proteins. Required for association of the 30S and 50S subunits to form the 70S ribosome, for tRNA binding and peptide bond formation. It has been suggested to have peptidyltransferase activity; this is somewhat controversial. Makes several contacts with the 16S rRNA in the 70S ribosome. This Elusimicrobium minutum (strain Pei191) protein is Large ribosomal subunit protein uL2.